The sequence spans 20 residues: Agglutinin beta-2 chain (20 aa).

Residues 1–20 (GRNGKSQSIIVGPWGDRVTN) are disordered.

It belongs to the jacalin lectin family. As to quaternary structure, formed of four alpha chains and four beta chains.

Its function is as follows. D-galactose-specific lectin, binds the T-antigen structure Gal-beta1,3-GalNAc. This chain is Agglutinin beta-2 chain, found in Maclura pomifera (Osage orange).